A 190-amino-acid polypeptide reads, in one-letter code: Ribosome-recycling factor (190 aa).

It belongs to the RRF family.

It is found in the cytoplasm. Its function is as follows. Responsible for the release of ribosomes from messenger RNA at the termination of protein biosynthesis. May increase the efficiency of translation by recycling ribosomes from one round of translation to another. This is Ribosome-recycling factor from Fusobacterium nucleatum subsp. nucleatum (strain ATCC 25586 / DSM 15643 / BCRC 10681 / CIP 101130 / JCM 8532 / KCTC 2640 / LMG 13131 / VPI 4355).